A 205-amino-acid chain; its full sequence is Large ribosomal subunit protein uL18 (205 aa).

This sequence belongs to the universal ribosomal protein uL18 family. In terms of assembly, part of the 50S ribosomal subunit. Contacts the 5S and 23S rRNAs.

Its function is as follows. This is one of the proteins that bind and probably mediate the attachment of the 5S RNA into the large ribosomal subunit, where it forms part of the central protuberance. This chain is Large ribosomal subunit protein uL18, found in Pyrobaculum aerophilum (strain ATCC 51768 / DSM 7523 / JCM 9630 / CIP 104966 / NBRC 100827 / IM2).